The following is a 160-amino-acid chain: MMERFEKIEMKIPAKAEYVAIIRLTMAGVANRMGFAYDDIEDMKIAISEACTNIVQHAYKEDVGEITIVFGLYEDRLEIMAADNGVSFDFNSLKSKVGPYDINKPVEHLPENGLGLYLINTLMDDIQIMHDEGMTVLMTKYIQREQVENDGNPISTYKSY.

It belongs to the anti-sigma-factor family.

The catalysed reaction is L-seryl-[protein] + ATP = O-phospho-L-seryl-[protein] + ADP + H(+). It catalyses the reaction L-threonyl-[protein] + ATP = O-phospho-L-threonyl-[protein] + ADP + H(+). In terms of biological role, negative regulator of sigma-B activity. Phosphorylates and inactivates its specific antagonist protein, RsbV. Upon phosphorylation of RsbV, RsbW is released and binds to sigma-B, thereby blocking its ability to form an RNA polymerase holoenzyme (E-sigma-B). The protein is Serine-protein kinase RsbW of Bacillus cereus (strain B4264).